Reading from the N-terminus, the 431-residue chain is Histidine--tRNA ligase (431 aa).

Belongs to the class-II aminoacyl-tRNA synthetase family. Homodimer.

The protein localises to the cytoplasm. It carries out the reaction tRNA(His) + L-histidine + ATP = L-histidyl-tRNA(His) + AMP + diphosphate + H(+). The chain is Histidine--tRNA ligase from Neisseria meningitidis serogroup A / serotype 4A (strain DSM 15465 / Z2491).